Consider the following 337-residue polypeptide: ATP-dependent 6-phosphofructokinase (337 aa).

Gly-11 is a binding site for ATP. Position 21–25 (21–25 (RAVVR)) interacts with ADP. ATP contacts are provided by residues 72–73 (RY) and 102–105 (GDGS). Asp-103 contacts Mg(2+). Residue 125 to 127 (TID) coordinates substrate. The Proton acceptor role is filled by Asp-127. Arg-154 is a binding site for ADP. Residues Arg-162 and 169-171 (MGR) each bind substrate. ADP-binding positions include 185–187 (GAD), Lys-212, and 214–216 (KNH). Substrate is bound by residues Glu-223, Arg-245, and 251 to 254 (HILR).

The protein belongs to the phosphofructokinase type A (PFKA) family. ATP-dependent PFK group I subfamily. Prokaryotic clade 'B1' sub-subfamily. Homotetramer. Mg(2+) serves as cofactor.

It localises to the cytoplasm. It carries out the reaction beta-D-fructose 6-phosphate + ATP = beta-D-fructose 1,6-bisphosphate + ADP + H(+). It participates in carbohydrate degradation; glycolysis; D-glyceraldehyde 3-phosphate and glycerone phosphate from D-glucose: step 3/4. Its activity is regulated as follows. Allosterically activated by ADP and other diphosphonucleosides, and allosterically inhibited by phosphoenolpyruvate. Its function is as follows. Catalyzes the phosphorylation of D-fructose 6-phosphate to fructose 1,6-bisphosphate by ATP, the first committing step of glycolysis. The polypeptide is ATP-dependent 6-phosphofructokinase (Streptococcus pyogenes serotype M1).